We begin with the raw amino-acid sequence, 306 residues long: LysM and putative peptidoglycan-binding domain-containing protein 3 (306 aa).

Topologically, residues 1–217 (MAGRHQNRSF…PYYGADWGIG (217 aa)) are extracellular. Residue N7 is glycosylated (N-linked (GlcNAc...) asparagine). S55 carries the phosphoserine modification. Residues 65 to 109 (LTKDIQEGDTLNAIALQYCCTVADIKRVNNLISDQDFFALRSIKI) enclose the LysM domain. A helical transmembrane segment spans residues 218 to 238 (WWTAVVIMLIVGIITPVFYLL). Topologically, residues 239-306 (YYEILAKVDV…SQSPAAQQET (68 aa)) are cytoplasmic.

It localises to the cell membrane. Its subcellular location is the golgi apparatus. Its function is as follows. Essential for Golgi structural integrity. This is LysM and putative peptidoglycan-binding domain-containing protein 3 (LYSMD3) from Homo sapiens (Human).